A 200-amino-acid polypeptide reads, in one-letter code: Small ribosomal subunit protein uS4 (200 aa).

Residues 20–41 (TGTGKELDKRPYAPGQHGPNQR) form a disordered region. In terms of domain architecture, S4 RNA-binding spans 92–152 (SRLDNLVYRL…EKSKNLDVVK (61 aa)).

This sequence belongs to the universal ribosomal protein uS4 family. Part of the 30S ribosomal subunit. Contacts protein S5. The interaction surface between S4 and S5 is involved in control of translational fidelity.

Functionally, one of the primary rRNA binding proteins, it binds directly to 16S rRNA where it nucleates assembly of the body of the 30S subunit. With S5 and S12 plays an important role in translational accuracy. The sequence is that of Small ribosomal subunit protein uS4 from Oceanobacillus iheyensis (strain DSM 14371 / CIP 107618 / JCM 11309 / KCTC 3954 / HTE831).